The following is a 523-amino-acid chain: NADH-ubiquinone oxidoreductase chain 2 (523 aa).

14 helical membrane passes run leucine 3–isoleucine 23, isoleucine 30–glycine 50, valine 62–leucine 82, serine 110–isoleucine 130, leucine 135–isoleucine 155, phenylalanine 170–phenylalanine 190, isoleucine 212–phenylalanine 232, valine 246–phenylalanine 266, leucine 281–tyrosine 301, leucine 306–asparagine 326, phenylalanine 333–alanine 353, glycine 386–phenylalanine 406, glycine 419–leucine 439, and leucine 490–leucine 510.

The protein belongs to the complex I subunit 2 family.

It is found in the mitochondrion inner membrane. It catalyses the reaction a ubiquinone + NADH + 5 H(+)(in) = a ubiquinol + NAD(+) + 4 H(+)(out). Its function is as follows. Core subunit of the mitochondrial membrane respiratory chain NADH dehydrogenase (Complex I) that is believed to belong to the minimal assembly required for catalysis. Complex I functions in the transfer of electrons from NADH to the respiratory chain. The immediate electron acceptor for the enzyme is believed to be ubiquinone. The chain is NADH-ubiquinone oxidoreductase chain 2 from Rhizopus oryzae (Mucormycosis agent).